A 127-amino-acid chain; its full sequence is MPTIQQLIRTEREKARQKTKSPALKQCPQRRGVCTRVYTTTPKKPNSALRKVARVRLTSGFEVTAYIPGIGHNLQEHSVVMIRGGRVKDLPGVRYHIIRGTLDTAGVKDRKQGRSKYGTKRPKEAKK.

The disordered stretch occupies residues 8-28 (IRTEREKARQKTKSPALKQCP). A 3-methylthioaspartic acid modification is found at Asp-89. A disordered region spans residues 102 to 127 (LDTAGVKDRKQGRSKYGTKRPKEAKK). Residues 113–127 (GRSKYGTKRPKEAKK) are compositionally biased toward basic residues.

It belongs to the universal ribosomal protein uS12 family. Part of the 30S ribosomal subunit. Contacts proteins S8 and S17. May interact with IF1 in the 30S initiation complex.

With S4 and S5 plays an important role in translational accuracy. Its function is as follows. Interacts with and stabilizes bases of the 16S rRNA that are involved in tRNA selection in the A site and with the mRNA backbone. Located at the interface of the 30S and 50S subunits, it traverses the body of the 30S subunit contacting proteins on the other side and probably holding the rRNA structure together. The combined cluster of proteins S8, S12 and S17 appears to hold together the shoulder and platform of the 30S subunit. The polypeptide is Small ribosomal subunit protein uS12 (Nostoc sp. (strain PCC 7120 / SAG 25.82 / UTEX 2576)).